The sequence spans 419 residues: UDP-N-acetylglucosamine 1-carboxyvinyltransferase (419 aa).

Lys22–Asn23 is a phosphoenolpyruvate binding site. UDP-N-acetyl-alpha-D-glucosamine is bound at residue Arg91. Cys115 serves as the catalytic Proton donor. Position 115 is a 2-(S-cysteinyl)pyruvic acid O-phosphothioketal (Cys115). UDP-N-acetyl-alpha-D-glucosamine is bound by residues Arg120 to Leu124, Lys160 to Val163, Asp305, and Val327.

It belongs to the EPSP synthase family. MurA subfamily.

Its subcellular location is the cytoplasm. It carries out the reaction phosphoenolpyruvate + UDP-N-acetyl-alpha-D-glucosamine = UDP-N-acetyl-3-O-(1-carboxyvinyl)-alpha-D-glucosamine + phosphate. It functions in the pathway cell wall biogenesis; peptidoglycan biosynthesis. Cell wall formation. Adds enolpyruvyl to UDP-N-acetylglucosamine. This chain is UDP-N-acetylglucosamine 1-carboxyvinyltransferase, found in Salmonella gallinarum (strain 287/91 / NCTC 13346).